The following is a 149-amino-acid chain: Cytochrome c-type biogenesis protein CcmE (149 aa).

Residues Met1–Arg7 are Cytoplasmic-facing. Residues Leu8–Ala28 form a helical; Signal-anchor for type II membrane protein membrane-spanning segment. Residues Phe29 to Lys149 are Periplasmic-facing. His123 and Tyr127 together coordinate heme.

Belongs to the CcmE/CycJ family.

The protein localises to the cell inner membrane. Functionally, heme chaperone required for the biogenesis of c-type cytochromes. Transiently binds heme delivered by CcmC and transfers the heme to apo-cytochromes in a process facilitated by CcmF and CcmH. The chain is Cytochrome c-type biogenesis protein CcmE from Polaromonas naphthalenivorans (strain CJ2).